Consider the following 124-residue polypeptide: Small ribosomal subunit protein uS12 (124 aa).

Position 89 is a 3-methylthioaspartic acid (Asp89).

This sequence belongs to the universal ribosomal protein uS12 family. In terms of assembly, part of the 30S ribosomal subunit. Contacts proteins S8 and S17. May interact with IF1 in the 30S initiation complex.

Its function is as follows. With S4 and S5 plays an important role in translational accuracy. Functionally, interacts with and stabilizes bases of the 16S rRNA that are involved in tRNA selection in the A site and with the mRNA backbone. Located at the interface of the 30S and 50S subunits, it traverses the body of the 30S subunit contacting proteins on the other side and probably holding the rRNA structure together. The combined cluster of proteins S8, S12 and S17 appears to hold together the shoulder and platform of the 30S subunit. This chain is Small ribosomal subunit protein uS12, found in Acinetobacter baylyi (strain ATCC 33305 / BD413 / ADP1).